Here is a 160-residue protein sequence, read N- to C-terminus: Transcriptional repressor NrdR (160 aa).

Residues 3 to 34 fold into a zinc finger; sequence CPFCGHADTQVVDSRVSEEGDTIRRRRRCLSC. Residues 49 to 139 form the ATP-cone domain; that stretch reads PTVVKRDGSR…VYKSFEDIGE (91 aa).

Belongs to the NrdR family. It depends on Zn(2+) as a cofactor.

Its function is as follows. Negatively regulates transcription of bacterial ribonucleotide reductase nrd genes and operons by binding to NrdR-boxes. In Bordetella avium (strain 197N), this protein is Transcriptional repressor NrdR.